A 263-amino-acid chain; its full sequence is Small ribosomal subunit protein eS4 (263 aa).

One can recognise an S4 RNA-binding domain in the interval 42-104 (LPLVIFLRNR…TNELFRLIYD (63 aa)).

The protein belongs to the eukaryotic ribosomal protein eS4 family.

The chain is Small ribosomal subunit protein eS4 (RpS4) from Spodoptera frugiperda (Fall armyworm).